Consider the following 471-residue polypeptide: Glutamate--tRNA ligase (471 aa).

The 'HIGH' region motif lies at 10–20 (PSPTGFLHIGG). A disordered region spans residues 117-137 (GRPPRYDGRWRDRPASERPTD). The short motif at 239–243 (KLSKR) is the 'KMSKS' region element. Residue lysine 242 coordinates ATP.

This sequence belongs to the class-I aminoacyl-tRNA synthetase family. Glutamate--tRNA ligase type 1 subfamily. In terms of assembly, monomer.

It is found in the cytoplasm. The enzyme catalyses tRNA(Glu) + L-glutamate + ATP = L-glutamyl-tRNA(Glu) + AMP + diphosphate. Its function is as follows. Catalyzes the attachment of glutamate to tRNA(Glu) in a two-step reaction: glutamate is first activated by ATP to form Glu-AMP and then transferred to the acceptor end of tRNA(Glu). The sequence is that of Glutamate--tRNA ligase from Azorhizobium caulinodans (strain ATCC 43989 / DSM 5975 / JCM 20966 / LMG 6465 / NBRC 14845 / NCIMB 13405 / ORS 571).